The primary structure comprises 116 residues: HTH-type transcriptional regulator SarV (116 aa).

Residues 51–74 constitute a DNA-binding region (H-T-H motif); that stretch reads RDTLHFEMLWDTSKIDVIIRKIYK.

The protein belongs to the SarA family.

Its subcellular location is the cytoplasm. Part of the pathway by which MgrA and SarA control autolysis. The polypeptide is HTH-type transcriptional regulator SarV (sarV) (Staphylococcus aureus (strain Mu50 / ATCC 700699)).